The chain runs to 490 residues: MGSISEMVFETCPSPNPIHVMLVSFQGQGHVNPLLRLGKLIASKGLLVTFVTTELWGKKMRQANKIVDGELKPVGSGSIRFEFFDEEWAEDDDRRADFSLYIAHLESVGIREVSKLVRRYEEANEPVSCLINNPFIPWVCHVAEEFNIPCAVLWVQSCACFSAYYHYQDGSVSFPTETEPELDVKLPCVPVLKNDEIPSFLHPSSRFTGFRQAILGQFKNLSKSFCVLIDSFDSLEQEVIDYMSSLCPVKTVGPLFKVARTVTSDVSGDICKSTDKCLEWLDSRPKSSVVYISFGTVAYLKQEQIEEIAHGVLKSGLSFLWVIRPPPHDLKVETHVLPQELKESSAKGKGMIVDWCPQEQVLSHPSVACFVTHCGWNSTMESLSSGVPVVCCPQWGDQVTDAVYLIDVFKTGVRLGRGATEERVVPREEVAEKLLEATVGEKAEELRKNALKWKAEAEAAVAPGGSSDKNFREFVEKLGAGVTKTKDNGY.

The active-site Proton acceptor is histidine 30. Histidine 30 contacts an anthocyanidin. Glutamine 358, histidine 373, tryptophan 376, asparagine 377, serine 378, and glutamate 381 together coordinate UDP-alpha-D-glucose. Glycine 396 contributes to the an anthocyanidin binding site. 2 residues coordinate UDP-alpha-D-glucose: aspartate 397 and glutamine 398.

It belongs to the UDP-glycosyltransferase family. In terms of tissue distribution, expressed in roots, flowers and siliques.

It carries out the reaction (E)-4-coumarate + UDP-alpha-D-glucose = 4-O-(beta-D-glucosyl)-trans-4-coumarate + UDP + H(+). The catalysed reaction is (E)-ferulate + UDP-alpha-D-glucose = 1-O-[(E)-feruloyl]-beta-D-glucose + UDP. It catalyses the reaction (E)-caffeate + UDP-alpha-D-glucose = 1-O-[(E)-caffeoyl]-beta-D-glucose + UDP. The enzyme catalyses (E)-sinapate + UDP-alpha-D-glucose = 1-O-(trans-sinapoyl)-beta-D-glucose + UDP. It carries out the reaction (E)-cinnamate + UDP-alpha-D-glucose = 1-O-(trans-cinnamoyl)-beta-D-glucose + UDP. Its function is as follows. UDP-glucosyltransferase that forms glucose esters with phenylpropanoids. Glucosylates 4-coumarate, ferulate, caffeate, sinapate and cinnamate. Can glucosylate the phytotoxic xenobiotic compound 2,4,5-trichlorophenol (TCP). In Arabidopsis thaliana (Mouse-ear cress), this protein is UDP-glycosyltransferase 84A1.